We begin with the raw amino-acid sequence, 166 residues long: Large ribosomal subunit protein uL10 (166 aa).

The protein belongs to the universal ribosomal protein uL10 family. In terms of assembly, part of the ribosomal stalk of the 50S ribosomal subunit. The N-terminus interacts with L11 and the large rRNA to form the base of the stalk. The C-terminus forms an elongated spine to which L12 dimers bind in a sequential fashion forming a multimeric L10(L12)X complex.

Forms part of the ribosomal stalk, playing a central role in the interaction of the ribosome with GTP-bound translation factors. The chain is Large ribosomal subunit protein uL10 from Oceanobacillus iheyensis (strain DSM 14371 / CIP 107618 / JCM 11309 / KCTC 3954 / HTE831).